The following is a 268-amino-acid chain: Cyclohexadienyl dehydratase (268 aa).

Positions 1–25 (MPKSFRHLVQALACLALLASASLQA) are cleaved as a signal peptide.

Belongs to the bacterial solute-binding protein 3 family. In terms of assembly, homodimer.

Its subcellular location is the periplasm. The catalysed reaction is prephenate + H(+) = 3-phenylpyruvate + CO2 + H2O. It catalyses the reaction L-arogenate + H(+) = L-phenylalanine + CO2 + H2O. It participates in amino-acid biosynthesis; L-phenylalanine biosynthesis; L-phenylalanine from L-arogenate: step 1/1. Its pathway is amino-acid biosynthesis; L-phenylalanine biosynthesis; phenylpyruvate from prephenate: step 1/1. Its function is as follows. Forms alternative pathway for phenylalanine biosynthesis. Can catalyze two reactions: prephenate dehydratase and arogenate dehydratase. May have a role in chemotaxis or transport. In Pseudomonas aeruginosa (strain ATCC 15692 / DSM 22644 / CIP 104116 / JCM 14847 / LMG 12228 / 1C / PRS 101 / PAO1), this protein is Cyclohexadienyl dehydratase (pheC).